The primary structure comprises 151 residues: Putative pre-16S rRNA nuclease (151 aa).

The protein belongs to the YqgF nuclease family.

Its subcellular location is the cytoplasm. Could be a nuclease involved in processing of the 5'-end of pre-16S rRNA. The sequence is that of Putative pre-16S rRNA nuclease from Neisseria meningitidis serogroup B (strain ATCC BAA-335 / MC58).